We begin with the raw amino-acid sequence, 773 residues long: Phenylalanine--tRNA ligase beta subunit (773 aa).

Residues 39–150 (LKAPDKVVVG…GKLELGRPLN (112 aa)) enclose the tRNA-binding domain. The B5 domain occupies 391–467 (KELPIIPISI…RIIGIDNIAS (77 aa)). 4 residues coordinate Mg(2+): Asp445, Asp451, Glu454, and Glu455. The 92-residue stretch at 682–773 (SKFPAITRDL…TLKNLGLDLR (92 aa)) folds into the FDX-ACB domain.

Belongs to the phenylalanyl-tRNA synthetase beta subunit family. Type 1 subfamily. In terms of assembly, tetramer of two alpha and two beta subunits. It depends on Mg(2+) as a cofactor.

The protein resides in the cytoplasm. The catalysed reaction is tRNA(Phe) + L-phenylalanine + ATP = L-phenylalanyl-tRNA(Phe) + AMP + diphosphate + H(+). This chain is Phenylalanine--tRNA ligase beta subunit (pheT), found in Campylobacter jejuni subsp. jejuni serotype O:2 (strain ATCC 700819 / NCTC 11168).